Here is a 136-residue protein sequence, read N- to C-terminus: Ubiquinol-cytochrome c reductase complex assembly factor 2 (136 aa).

The N-terminal 13 residues, 1-13, are a transit peptide targeting the mitochondrion; that stretch reads MAASRYRRFLKLC. A disordered region spans residues 114–136; sequence KFAPGSPEGKHTAWARALPRPRT.

Interacts with UQCC1. Forms a complex, named COMB/coordinator of mitochondrial CYTB biogenesis, composed of UQCC1, UQCC2, UQCC4, UQCC5 and UQCC6; stabilizes nascent cytochrome b/MT-CYB and promotes its membrane insertion. Forms a complex, named COMB/coordinator of mitochondrial CYTB biogenesis, composed of UQCC1, UQCC2, UQCC4, UQCC5 and UQCC6; stabilizes nascent cytochrome b/MT-CYB and promotes its membrane insertion. Forms a complex, named COMA, composed of UQCC1, UQCC2 and UQCC4; activates MT-CYB translation. Forms a complex, named COMC, composed of UQCC1, UQCC2; UQCC3 and UQCC4; mediates MT-CYB hemylation and association with the first nuclear-encoded CIII subunit UQCRQ.

It localises to the mitochondrion matrix. The protein resides in the mitochondrion nucleoid. It is found in the mitochondrion. The protein localises to the mitochondrion intermembrane space. Its subcellular location is the mitochondrion inner membrane. In terms of biological role, required for the assembly of the ubiquinol-cytochrome c reductase complex (mitochondrial respiratory chain complex III or cytochrome b-c1 complex). Plays a role in the modulation of respiratory chain activities such as oxygen consumption and ATP production and via its modulation of the respiratory chain activity can regulate skeletal muscle differentiation and insulin secretion by pancreatic beta-cells. Involved in cytochrome b translation and/or stability. The sequence is that of Ubiquinol-cytochrome c reductase complex assembly factor 2 (UQCC2) from Bos taurus (Bovine).